The primary structure comprises 428 residues: Serine--tRNA ligase (428 aa).

231 to 233 (TSE) is an L-serine binding site. ATP contacts are provided by residues 262 to 264 (RRE) and Val-278. Glu-285 contributes to the L-serine binding site. An ATP-binding site is contributed by 349 to 352 (ELTS). Thr-384 contacts L-serine.

Belongs to the class-II aminoacyl-tRNA synthetase family. Type-1 seryl-tRNA synthetase subfamily. Homodimer. The tRNA molecule binds across the dimer.

It is found in the cytoplasm. The enzyme catalyses tRNA(Ser) + L-serine + ATP = L-seryl-tRNA(Ser) + AMP + diphosphate + H(+). It catalyses the reaction tRNA(Sec) + L-serine + ATP = L-seryl-tRNA(Sec) + AMP + diphosphate + H(+). Its pathway is aminoacyl-tRNA biosynthesis; selenocysteinyl-tRNA(Sec) biosynthesis; L-seryl-tRNA(Sec) from L-serine and tRNA(Sec): step 1/1. Catalyzes the attachment of serine to tRNA(Ser). Is also able to aminoacylate tRNA(Sec) with serine, to form the misacylated tRNA L-seryl-tRNA(Sec), which will be further converted into selenocysteinyl-tRNA(Sec). This is Serine--tRNA ligase from Bifidobacterium longum (strain DJO10A).